Reading from the N-terminus, the 560-residue chain is Formate--tetrahydrofolate ligase (560 aa).

Position 70–77 (70–77 (TPAGEGKT)) interacts with ATP.

Belongs to the formate--tetrahydrofolate ligase family.

The catalysed reaction is (6S)-5,6,7,8-tetrahydrofolate + formate + ATP = (6R)-10-formyltetrahydrofolate + ADP + phosphate. Its pathway is one-carbon metabolism; tetrahydrofolate interconversion. The sequence is that of Formate--tetrahydrofolate ligase from Methanocorpusculum labreanum (strain ATCC 43576 / DSM 4855 / Z).